The primary structure comprises 639 residues: Extracellular metalloproteinase 1 (639 aa).

The N-terminal stretch at 1–19 is a signal peptide; that stretch reads MHGLLLAAGLISLPLHVLA. Positions 20 to 250 are excised as a propeptide; it reads HPQPSSTSLA…VHNVVDYVAH (231 aa). The N-linked (GlcNAc...) asparagine glycan is linked to Asn291. His434 provides a ligand contact to Zn(2+). Glu435 is a catalytic residue. Position 438 (His438) interacts with Zn(2+). N-linked (GlcNAc...) asparagine glycosylation occurs at Asn598.

Belongs to the peptidase M36 family. The cofactor is Zn(2+).

The protein localises to the secreted. Secreted metalloproteinase probably acting as a virulence factor. This is Extracellular metalloproteinase 1 (MEP1) from Arthroderma otae (strain ATCC MYA-4605 / CBS 113480) (Microsporum canis).